The following is a 269-amino-acid chain: 1-(5-phosphoribosyl)-5-[(5-phosphoribosylamino)methylideneamino] imidazole-4-carboxamide isomerase (269 aa).

The active-site Proton acceptor is the aspartate 10. Aspartate 132 functions as the Proton donor in the catalytic mechanism.

It belongs to the HisA/HisF family.

The protein localises to the cytoplasm. The catalysed reaction is 1-(5-phospho-beta-D-ribosyl)-5-[(5-phospho-beta-D-ribosylamino)methylideneamino]imidazole-4-carboxamide = 5-[(5-phospho-1-deoxy-D-ribulos-1-ylimino)methylamino]-1-(5-phospho-beta-D-ribosyl)imidazole-4-carboxamide. Its pathway is amino-acid biosynthesis; L-histidine biosynthesis; L-histidine from 5-phospho-alpha-D-ribose 1-diphosphate: step 4/9. The chain is 1-(5-phosphoribosyl)-5-[(5-phosphoribosylamino)methylideneamino] imidazole-4-carboxamide isomerase from Xylella fastidiosa (strain Temecula1 / ATCC 700964).